The following is a 126-amino-acid chain: Aspartate 1-decarboxylase (126 aa).

The Schiff-base intermediate with substrate; via pyruvic acid role is filled by serine 25. Pyruvic acid (Ser) is present on serine 25. Threonine 57 is a substrate binding site. Tyrosine 58 functions as the Proton donor in the catalytic mechanism. 73 to 75 serves as a coordination point for substrate; sequence GAA.

It belongs to the PanD family. As to quaternary structure, heterooctamer of four alpha and four beta subunits. Pyruvate serves as cofactor. In terms of processing, is synthesized initially as an inactive proenzyme, which is activated by self-cleavage at a specific serine bond to produce a beta-subunit with a hydroxyl group at its C-terminus and an alpha-subunit with a pyruvoyl group at its N-terminus.

It localises to the cytoplasm. The enzyme catalyses L-aspartate + H(+) = beta-alanine + CO2. Its pathway is cofactor biosynthesis; (R)-pantothenate biosynthesis; beta-alanine from L-aspartate: step 1/1. Its function is as follows. Catalyzes the pyruvoyl-dependent decarboxylation of aspartate to produce beta-alanine. This is Aspartate 1-decarboxylase from Proteus mirabilis (strain HI4320).